The following is a 333-amino-acid chain: Biotin synthase (333 aa).

The Radical SAM core domain occupies 46–275; the sequence is YYGKKVKLNM…TKEIRISGGR (230 aa). The [4Fe-4S] cluster site is built by Cys-64, Cys-68, and Cys-71. The [2Fe-2S] cluster site is built by Cys-108, Cys-140, Cys-200, and Arg-270.

It belongs to the radical SAM superfamily. Biotin synthase family. In terms of assembly, homodimer. The cofactor is [4Fe-4S] cluster. [2Fe-2S] cluster is required as a cofactor.

It carries out the reaction (4R,5S)-dethiobiotin + (sulfur carrier)-SH + 2 reduced [2Fe-2S]-[ferredoxin] + 2 S-adenosyl-L-methionine = (sulfur carrier)-H + biotin + 2 5'-deoxyadenosine + 2 L-methionine + 2 oxidized [2Fe-2S]-[ferredoxin]. It participates in cofactor biosynthesis; biotin biosynthesis; biotin from 7,8-diaminononanoate: step 2/2. Catalyzes the conversion of dethiobiotin (DTB) to biotin by the insertion of a sulfur atom into dethiobiotin via a radical-based mechanism. The sequence is that of Biotin synthase from Halalkalibacterium halodurans (strain ATCC BAA-125 / DSM 18197 / FERM 7344 / JCM 9153 / C-125) (Bacillus halodurans).